Reading from the N-terminus, the 72-residue chain is Protein kish-A (72 aa).

The signal sequence occupies residues 1–26; sequence MSAIFNFQSLLTVILLLICTCAYIRS. Over 27-53 the chain is Extracellular; that stretch reads LAPSILDRNKTGLLGIFWKCARIGERK. The N-linked (GlcNAc...) asparagine glycan is linked to Asn35. Residues 54–71 form a helical membrane-spanning segment; sequence SPYVAICCIVMAFSILFI. A topological domain (cytoplasmic) is located at residue Gln72.

It belongs to the KISH family.

Its subcellular location is the golgi apparatus membrane. In terms of biological role, involved in the early part of the secretory pathway. The protein is Protein kish-A (Tmem167a) of Mus musculus (Mouse).